The primary structure comprises 166 residues: Large ribosomal subunit protein uL10 (166 aa).

This sequence belongs to the universal ribosomal protein uL10 family. In terms of assembly, part of the ribosomal stalk of the 50S ribosomal subunit. The N-terminus interacts with L11 and the large rRNA to form the base of the stalk. The C-terminus forms an elongated spine to which L12 dimers bind in a sequential fashion forming a multimeric L10(L12)X complex.

In terms of biological role, forms part of the ribosomal stalk, playing a central role in the interaction of the ribosome with GTP-bound translation factors. The sequence is that of Large ribosomal subunit protein uL10 from Shewanella amazonensis (strain ATCC BAA-1098 / SB2B).